Consider the following 1104-residue polypeptide: Collagenase ColA (1104 aa).

Residues 1–39 (MKKNLKRGELTKLKLVERWSATFTLAAFILFNSSFKVLA) form the signal peptide. A propeptide spanning residues 40–86 (ADKKVENSNNGQITREINADQISKTELNNEVATDNNRPLGPSIAPSR) is cleaved from the precursor. Positions 87 to 761 (ARNNKIYTFD…YVYDVVFHGM (675 aa)) are S1 metalloprotease domain. Residues 93–367 (YTFDELNRMN…AANDLDLNFG (275 aa)) are activator domain. Positions 377-646 (DFNKIKADAR…MDSLLNNIDN (270 aa)) are catalytic subdomain. Glutamate 477 is a Ca(2+) binding site. Histidine 502 contacts Zn(2+). Glutamate 503 is an active-site residue. Histidine 506 is a Zn(2+) binding site. Ca(2+) is bound by residues glycine 510, valine 514, and glycine 516. Glutamate 534 provides a ligand contact to Zn(2+). The interval 654–767 (DEYVNGHEAK…FHGMNTDTNT (114 aa)) is helper subdomain. Residues 762–860 (NTDTNTDVHV…KKIKVVEDKP (99 aa)) are S2 domain. 17 residues coordinate Ca(2+): asparagine 772, lysine 773, aspartate 800, aspartate 802, aspartate 841, glutamate 866, glutamate 868, asparagine 870, aspartate 894, aspartate 897, glutamate 993, glutamate 995, asparagine 997, leucine 1016, aspartate 1020, lysine 1022, and aspartate 1023. Residues 774-862 (EPKAVIKSDS…IKVVEDKPVE (89 aa)) form the PKD domain. The S3a collagen-binding domain stretch occupies residues 865–979 (NESEPNNDFE…TYTVNVKGNL (115 aa)). The S3b collagen-binding domain stretch occupies residues 992–1104 (KEVENNNDFD…GNYIVNLQNK (113 aa)).

This sequence belongs to the peptidase M9B family. Collagenase subfamily. Requires Ca(2+) as cofactor. It depends on Zn(2+) as a cofactor.

It is found in the secreted. The catalysed reaction is Digestion of native collagen in the triple helical region at Xaa-|-Gly bonds. With synthetic peptides, a preference is shown for Gly at P3 and P1', Pro and Ala at P2 and P2', and hydroxyproline, Ala or Arg at P3'.. Functionally, clostridial collagenases are among the most efficient degraders of eukaryotic collagen known; saprophytes use collagen as a carbon source while pathogens additionally digest collagen to aid in host colonization. Has both tripeptidylcarboxypeptidase on Gly-X-Y and endopeptidase activities; the endopeptidase cuts within the triple helix region of collagen while tripeptidylcarboxypeptidase successively digests the exposed ends, thus clostridial collagenases can digest large sections of collagen. The sequence is that of Collagenase ColA (colA) from Clostridium perfringens (strain 13 / Type A).